The following is a 631-amino-acid chain: Sperm-associated antigen 16 protein (631 aa).

Residues aspartate 152 to arginine 267 are a coiled coil. Residues glutamine 266–lysine 332 are disordered. Composition is skewed to basic and acidic residues over residues lysine 277–alanine 287 and glycine 295–lysine 304. 7 WD repeats span residues leucine 350–threonine 389, glycine 392–threonine 431, glycine 434–threonine 473, glycine 476–serine 515, glycine 518–serine 557, isoleucine 560–methionine 600, and glycine 601–tryptophan 630.

In terms of assembly, interacts with SPAG6 and STK36. Phosphorylated by TSSK2. Isoform 1 is detected in testis. Isoform 4 is detected in testis and brain, and at lower levels in kidney, heart, pancreas, thyroid, ovary, adrenal gland, spinal cord, trachea and liver.

The protein localises to the cytoplasm. Its subcellular location is the cytoskeleton. It localises to the flagellum axoneme. The protein resides in the cilium axoneme. It is found in the cell projection. The protein localises to the cilium. Its subcellular location is the flagellum. Its function is as follows. Necessary for sperm flagellar function. Plays a role in motile ciliogenesis. May help to recruit STK36 to the cilium or apical surface of the cell to initiate subsequent steps of construction of the central pair apparatus of motile cilia. The polypeptide is Sperm-associated antigen 16 protein (SPAG16) (Homo sapiens (Human)).